The primary structure comprises 1026 residues: Multidrug resistance protein MdtC (1026 aa).

Transmembrane regions (helical) follow at residues 12–32 (VATL…FRLL), 333–353 (EVEQ…FLFL), 360–380 (AIPA…MYLC), 387–407 (LSLM…IVVL), 431–451 (VGFT…PLLL), 463–483 (FAVT…TLTP), 528–548 (WVLL…ISIP), 853–873 (LLLI…LYES), 875–895 (VHPL…LLAL), 897–917 (WFGA…IGIV), 953–973 (PIMM…LTSG), and 984–1004 (ITIV…TPVV).

The protein belongs to the resistance-nodulation-cell division (RND) (TC 2.A.6) family. MdtC subfamily. In terms of assembly, part of a tripartite efflux system composed of MdtA, MdtB and MdtC. MdtC forms a heteromultimer with MdtB.

It localises to the cell inner membrane. This is Multidrug resistance protein MdtC from Pectobacterium carotovorum subsp. carotovorum (strain PC1).